Consider the following 381-residue polypeptide: Mannitol-1-phosphate 5-dehydrogenase (381 aa).

3-14 is an NAD(+) binding site; sequence AVHFGAGNIGRG.

It belongs to the mannitol dehydrogenase family.

It carries out the reaction D-mannitol 1-phosphate + NAD(+) = beta-D-fructose 6-phosphate + NADH + H(+). This chain is Mannitol-1-phosphate 5-dehydrogenase, found in Exiguobacterium sibiricum (strain DSM 17290 / CCUG 55495 / CIP 109462 / JCM 13490 / 255-15).